We begin with the raw amino-acid sequence, 226 residues long: Ribonuclease 3 (226 aa).

Positions 6–128 constitute an RNase III domain; it reads IQKLQKILGY…LIGSIFLDSN (123 aa). Residue E41 coordinates Mg(2+). D45 is an active-site residue. 2 residues coordinate Mg(2+): N114 and E117. E117 is a catalytic residue. In terms of domain architecture, DRBM spans 155–225; it reads DPKTRLQEYL…AQNALIKLGI (71 aa).

Belongs to the ribonuclease III family. Homodimer. Requires Mg(2+) as cofactor.

It localises to the cytoplasm. The enzyme catalyses Endonucleolytic cleavage to 5'-phosphomonoester.. Its function is as follows. Digests double-stranded RNA. Involved in the processing of primary rRNA transcript to yield the immediate precursors to the large and small rRNAs (23S and 16S). Processes some mRNAs, and tRNAs when they are encoded in the rRNA operon. Processes pre-crRNA and tracrRNA of type II CRISPR loci if present in the organism. The protein is Ribonuclease 3 of Buchnera aphidicola subsp. Baizongia pistaciae (strain Bp).